The sequence spans 350 residues: 4-hydroxy-3-methylbut-2-enyl diphosphate reductase (350 aa).

Position 19 (Cys19) interacts with [4Fe-4S] cluster. (2E)-4-hydroxy-3-methylbut-2-enyl diphosphate-binding residues include His48 and His84. Residues His48 and His84 each coordinate dimethylallyl diphosphate. Residues His48 and His84 each coordinate isopentenyl diphosphate. Residue Cys106 coordinates [4Fe-4S] cluster. (2E)-4-hydroxy-3-methylbut-2-enyl diphosphate is bound at residue His134. Residue His134 coordinates dimethylallyl diphosphate. His134 lines the isopentenyl diphosphate pocket. Glu136 serves as the catalytic Proton donor. Thr175 contributes to the (2E)-4-hydroxy-3-methylbut-2-enyl diphosphate binding site. Cys205 provides a ligand contact to [4Fe-4S] cluster. Ser233, Ser234, Asn235, and Ser278 together coordinate (2E)-4-hydroxy-3-methylbut-2-enyl diphosphate. Dimethylallyl diphosphate-binding residues include Ser233, Ser234, Asn235, and Ser278. Positions 233, 234, 235, and 278 each coordinate isopentenyl diphosphate.

The protein belongs to the IspH family. It depends on [4Fe-4S] cluster as a cofactor.

It carries out the reaction isopentenyl diphosphate + 2 oxidized [2Fe-2S]-[ferredoxin] + H2O = (2E)-4-hydroxy-3-methylbut-2-enyl diphosphate + 2 reduced [2Fe-2S]-[ferredoxin] + 2 H(+). The catalysed reaction is dimethylallyl diphosphate + 2 oxidized [2Fe-2S]-[ferredoxin] + H2O = (2E)-4-hydroxy-3-methylbut-2-enyl diphosphate + 2 reduced [2Fe-2S]-[ferredoxin] + 2 H(+). It functions in the pathway isoprenoid biosynthesis; dimethylallyl diphosphate biosynthesis; dimethylallyl diphosphate from (2E)-4-hydroxy-3-methylbutenyl diphosphate: step 1/1. It participates in isoprenoid biosynthesis; isopentenyl diphosphate biosynthesis via DXP pathway; isopentenyl diphosphate from 1-deoxy-D-xylulose 5-phosphate: step 6/6. Functionally, catalyzes the conversion of 1-hydroxy-2-methyl-2-(E)-butenyl 4-diphosphate (HMBPP) into a mixture of isopentenyl diphosphate (IPP) and dimethylallyl diphosphate (DMAPP). Acts in the terminal step of the DOXP/MEP pathway for isoprenoid precursor biosynthesis. The chain is 4-hydroxy-3-methylbut-2-enyl diphosphate reductase from Brucella anthropi (strain ATCC 49188 / DSM 6882 / CCUG 24695 / JCM 21032 / LMG 3331 / NBRC 15819 / NCTC 12168 / Alc 37) (Ochrobactrum anthropi).